Here is a 254-residue protein sequence, read N- to C-terminus: 5'-nucleotidase SurE (254 aa).

Residues Asp-8, Asp-9, Ser-40, and Asn-93 each contribute to the a divalent metal cation site.

It belongs to the SurE nucleotidase family. It depends on a divalent metal cation as a cofactor.

It is found in the cytoplasm. The catalysed reaction is a ribonucleoside 5'-phosphate + H2O = a ribonucleoside + phosphate. Nucleotidase that shows phosphatase activity on nucleoside 5'-monophosphates. The sequence is that of 5'-nucleotidase SurE from Actinobacillus pleuropneumoniae serotype 5b (strain L20).